A 732-amino-acid polypeptide reads, in one-letter code: Copper-transporting ATPase (732 aa).

Residues 1 to 88 are Cytoplasmic-facing; the sequence is MTKAQFYIEG…NPSFLTPNVK (88 aa). An HMA domain is found at 2–68; the sequence is TKAQFYIEGM…QIEKLGYQPR (67 aa). Cu(+) contacts are provided by cysteine 13 and cysteine 16. Residues 89-109 form a helical membrane-spanning segment; sequence LALVLLGTLGVLALSMFAPLL. Topologically, residues 110-122 are extracellular; it reads PLPSFLKNPFING. Residues 123 to 142 form a helical membrane-spanning segment; that stretch reads IVQLVLSLMVMHMGRNFYVH. At 143 to 149 the chain is on the cytoplasmic side; it reads GFKALWA. A helical membrane pass occupies residues 150 to 170; the sequence is RQPNMDSLIALGTSAALLYSL. Residues 171–187 lie on the Extracellular side of the membrane; sequence VLLFRAYTHAPIEGYYF. The chain crosses the membrane as a helical span at residues 188-208; that stretch reads ESVCVILLFVMAGKRVEENSK. Over 209–336 the chain is Cytoplasmic; that stretch reads DKALEAMQSL…KAPIARLADK (128 aa). The chain crosses the membrane as a helical span at residues 337-359; sequence VAGVFVPIVIGIASIAFLVWLVL. Residues 360–365 lie on the Extracellular side of the membrane; the sequence is GDFTRA. Residues 366–383 traverse the membrane as a helical segment; sequence LEVFIAILVISCPCALGL. Over 384–663 the chain is Cytoplasmic; sequence ATPMALLVAQ…KLSALTIANI (280 aa). Aspartate 421 acts as the 4-aspartylphosphate intermediate in catalysis. Mg(2+) contacts are provided by aspartate 609 and aspartate 613. The chain crosses the membrane as a helical span at residues 664-683; that stretch reads KQNLFWAFCYNSIAIPLACG. The Extracellular segment spans residues 684 to 694; it reads VAYKLGIMFNP. The helical transmembrane segment at 695-713 threads the bilayer; that stretch reads MLASLAMSLSSVSVVLNAQ. At 714-732 the chain is on the cytoplasmic side; the sequence is RLRGAHFKIRGSHENRHSS.

It belongs to the cation transport ATPase (P-type) (TC 3.A.3) family. Type IB subfamily.

It localises to the cell membrane. It carries out the reaction Cu(+)(in) + ATP + H2O = Cu(+)(out) + ADP + phosphate + H(+). Functionally, probably involved in copper export. The chain is Copper-transporting ATPase (copA) from Helicobacter felis (strain ATCC 49179 / CCUG 28539 / NCTC 12436 / CS1).